A 971-amino-acid polypeptide reads, in one-letter code: Kinesin-like protein KIN-6 (971 aa).

Disordered stretches follow at residues 1-44 (MEEK…SSLA) and 93-121 (TTTT…RNPE). Residues 29–39 (ATPFTTTTKPP) are compositionally biased toward low complexity. Residues 76–460 (SLKIFLRIKP…LRQASPYMKI (385 aa)) form the Kinesin motor domain. An ATP-binding site is contributed by 202–209 (GPSGSGKT). Positions 700-709 (RREAGSEESS) are enriched in basic and acidic residues. Disordered regions lie at residues 700–856 (RREA…TEEM) and 872–917 (KTTN…RLQP). A compositionally biased stretch (polar residues) spans 768 to 783 (QSVNSEENVGIPSTIT). Basic and acidic residues predominate over residues 785-797 (VEAEVTDFQRDQN). Over residues 809 to 827 (EVSQDCINSGLSNVQTKSA) the composition is skewed to polar residues. The span at 831–842 (RFPDSEKQERNR) shows a compositional bias: basic and acidic residues. A compositionally biased stretch (basic residues) spans 903 to 915 (KKQKNGQKPKRRL).

The protein belongs to the TRAFAC class myosin-kinesin ATPase superfamily. Kinesin family. KIN-6 subfamily.

The polypeptide is Kinesin-like protein KIN-6 (Arabidopsis thaliana (Mouse-ear cress)).